The chain runs to 61 residues: Small ribosomal subunit protein uS14 (61 aa).

The Zn(2+) site is built by Cys24, Cys27, Cys40, and Cys43.

This sequence belongs to the universal ribosomal protein uS14 family. Zinc-binding uS14 subfamily. As to quaternary structure, part of the 30S ribosomal subunit. Contacts proteins S3 and S10. Zn(2+) is required as a cofactor.

In terms of biological role, binds 16S rRNA, required for the assembly of 30S particles and may also be responsible for determining the conformation of the 16S rRNA at the A site. The polypeptide is Small ribosomal subunit protein uS14 (Anoxybacillus flavithermus (strain DSM 21510 / WK1)).